Reading from the N-terminus, the 472-residue chain is 3-isopropylmalate dehydratase large subunit (472 aa).

[4Fe-4S] cluster-binding residues include Cys353, Cys414, and Cys417.

The protein belongs to the aconitase/IPM isomerase family. LeuC type 1 subfamily. Heterodimer of LeuC and LeuD. The cofactor is [4Fe-4S] cluster.

It carries out the reaction (2R,3S)-3-isopropylmalate = (2S)-2-isopropylmalate. It participates in amino-acid biosynthesis; L-leucine biosynthesis; L-leucine from 3-methyl-2-oxobutanoate: step 2/4. Its function is as follows. Catalyzes the isomerization between 2-isopropylmalate and 3-isopropylmalate, via the formation of 2-isopropylmaleate. This chain is 3-isopropylmalate dehydratase large subunit, found in Acinetobacter baumannii (strain ATCC 17978 / DSM 105126 / CIP 53.77 / LMG 1025 / NCDC KC755 / 5377).